The chain runs to 513 residues: ATP synthase subunit alpha (513 aa).

169-176 is a binding site for ATP; it reads GDRQTGKT.

It belongs to the ATPase alpha/beta chains family. F-type ATPases have 2 components, CF(1) - the catalytic core - and CF(0) - the membrane proton channel. CF(1) has five subunits: alpha(3), beta(3), gamma(1), delta(1), epsilon(1). CF(0) has three main subunits: a(1), b(2) and c(9-12). The alpha and beta chains form an alternating ring which encloses part of the gamma chain. CF(1) is attached to CF(0) by a central stalk formed by the gamma and epsilon chains, while a peripheral stalk is formed by the delta and b chains.

Its subcellular location is the cell inner membrane. The catalysed reaction is ATP + H2O + 4 H(+)(in) = ADP + phosphate + 5 H(+)(out). Its function is as follows. Produces ATP from ADP in the presence of a proton gradient across the membrane. The alpha chain is a regulatory subunit. The protein is ATP synthase subunit alpha of Pasteurella multocida (strain Pm70).